The chain runs to 609 residues: Probable ubiquitin-conjugating enzyme E2 25 (609 aa).

Disordered stretches follow at residues 70–99 and 151–185; these read EEDE…LDPE and ADKE…SQFS. Residues 156–178 are compositionally biased toward low complexity; the sequence is ASSSKSSHANNGNNSSKKATKAS. The UBC core domain maps to 332 to 492; the sequence is DWAKRIQDEW…TFILSLKTMV (161 aa). Cys418 serves as the catalytic Glycyl thioester intermediate.

Belongs to the ubiquitin-conjugating enzyme family. In terms of tissue distribution, expressed in seeds, pistils, siliques, hypocotyls and leaves.

The catalysed reaction is S-ubiquitinyl-[E1 ubiquitin-activating enzyme]-L-cysteine + [E2 ubiquitin-conjugating enzyme]-L-cysteine = [E1 ubiquitin-activating enzyme]-L-cysteine + S-ubiquitinyl-[E2 ubiquitin-conjugating enzyme]-L-cysteine.. The protein operates within protein modification; protein ubiquitination. Functionally, accepts the ubiquitin from the E1 complex and catalyzes its covalent attachment to other proteins. In Arabidopsis thaliana (Mouse-ear cress), this protein is Probable ubiquitin-conjugating enzyme E2 25 (UBC25).